The primary structure comprises 644 residues: MSFSITLPDGSKKDFEESLTIADLAQNIATSLGKAAVAGKVNGELKPLDYKLDSDSEVAIITNKDEEGLDVLRATAAFVFEAVAKCEYPELRLGEHVADEGGFYVDTDKDDQIKVGELPKLEKAMQKVIKNGEKIEHVQIAKSELEELYKNDKFKSELLAKVEGDTVDAYKLGDFVDFGFDALLPNTGKIKQFKLLSVAGAYWLGKSSNPMLQRIFGTAFFKEADLKADLKRRQEIKERDHRTIGRDLDLFFVDPKVGAGLPYWMPKGATIRRAVERYIIDREVADGYQHVYTPVLMNLDAYKTSGHWAHYRDDMFPPMDMGDGEMLELRPMNCPSHIQIFKHHIRSYRDLPLRVAELGMMHRYEKSGALSGLQRVREMTLNDGHTFVALDQVQTEFAKILKLIMEVYKDFDITDYYFRLSYRDPKNTDKYFANDEMWEKSQKMLKGAMDDLGLDYVEAEGEAAFYGPKLDIQTKTALGNDETMSTIQLDFMLPDRFGLTYVGKDGEEHRPVMIHRGIVGTMERFIAYLTEIYKGAFPTWLAPVQAEIIPVNNEAHGEYAEKVRAELAKRGFRVEVDDRNEKMGYKIRESQTQKVPYTLVLGDEEMKSGKVNLRRYGTDEEISKSLDDFINEIDADVKSYSREN.

One can recognise a TGS domain in the interval 1–62 (MSFSITLPDG…DSDSEVAIIT (62 aa)). Positions 240–538 (DHRTIGRDLD…LTEIYKGAFP (299 aa)) are catalytic. Residues C334, H385, and H515 each contribute to the Zn(2+) site.

Belongs to the class-II aminoacyl-tRNA synthetase family. Homodimer. It depends on Zn(2+) as a cofactor.

It localises to the cytoplasm. It catalyses the reaction tRNA(Thr) + L-threonine + ATP = L-threonyl-tRNA(Thr) + AMP + diphosphate + H(+). In terms of biological role, catalyzes the attachment of threonine to tRNA(Thr) in a two-step reaction: L-threonine is first activated by ATP to form Thr-AMP and then transferred to the acceptor end of tRNA(Thr). Also edits incorrectly charged L-seryl-tRNA(Thr). The sequence is that of Threonine--tRNA ligase from Lactobacillus helveticus (strain DPC 4571).